The chain runs to 445 residues: N-succinylarginine dihydrolase (445 aa).

Substrate contacts are provided by residues 19–28 (AGLSYGNVAS), asparagine 110, and 137–138 (HR). Residue glutamate 174 is part of the active site. Substrate is bound at residue arginine 214. Residue histidine 250 is part of the active site. The substrate site is built by aspartate 252 and asparagine 363. The active-site Nucleophile is the cysteine 369.

Belongs to the succinylarginine dihydrolase family. Homodimer.

It carries out the reaction N(2)-succinyl-L-arginine + 2 H2O + 2 H(+) = N(2)-succinyl-L-ornithine + 2 NH4(+) + CO2. It functions in the pathway amino-acid degradation; L-arginine degradation via AST pathway; L-glutamate and succinate from L-arginine: step 2/5. Functionally, catalyzes the hydrolysis of N(2)-succinylarginine into N(2)-succinylornithine, ammonia and CO(2). The protein is N-succinylarginine dihydrolase of Shewanella loihica (strain ATCC BAA-1088 / PV-4).